Consider the following 450-residue polypeptide: Keratin, type I cytoskeletal 25 (450 aa).

Low complexity predominate over residues 1–11 (MSLRLSSASRR). Residues 1-20 (MSLRLSSASRRSCPRPTTGS) are disordered. Residues 1-78 (MSLRLSSASR…VNERGLLSGN (78 aa)) are head. Residues 79-114 (EKVTMQNLNDRLASYLDSVHALEEANADLEQKIKGW) are coil 1A. An IF rod domain is found at 79-394 (EKVTMQNLND…LLIGGDDGAC (316 aa)). The interval 115–136 (YEKFGPGSCRGLDHDYSRYFPI) is linker 1. Residues 137–228 (IDDLKNQIIA…KNHKEEMQVL (92 aa)) are coil 1B. Residues 229 to 251 (QCAAGGNVNVEMNAAPGVDLTVL) form a linker 12 region. The segment at 252–390 (LNNMRAEYEA…ETYCLLIGGD (139 aa)) is coil 2. The tract at residues 391 to 450 (DGACKSGGYKSKDYGSGNVGSQVKDPAKAIVVKKVLEEVDQRSKILTTRLHSLEEKSQSN) is tail. Phosphoserine is present on serine 442.

It belongs to the intermediate filament family. As to quaternary structure, heterodimer of a type I and a type II keratin. Heterodimer with type II keratin KRT5 leading to the formation of keratin intermediate filament (KIF) network. Interacts with KRT6A to form filaments. In terms of tissue distribution, strongly expressed in skin and scalp, and weak expression observed in thymus and tongue. In the hair follicle, expressed in Henle layer, Huxley layer and in the inner root sheath cuticle of the hair follicle. Expression extends from the bulb region up to the point of differentiation into the three layers. Also present in the medulla of beard hair (at protein level).

Its subcellular location is the cytoplasm. Essential for the proper assembly of type I and type II keratin protein complexes and formation of keratin intermediate filaments in the inner root sheath (irs). Plays a role in the cytoskeleton organization. This Homo sapiens (Human) protein is Keratin, type I cytoskeletal 25.